The primary structure comprises 1292 residues: SH3 and multiple ankyrin repeat domains protein 2 (1292 aa).

In terms of domain architecture, PDZ spans 56-150 (TVVLQKKDNE…HLVLKVVTVT (95 aa)). Disordered regions lie at residues 155–176 (PDDT…TALS), 331–393 (MPDA…SDNV), 488–508 (IKEP…METD), 604–656 (SSNA…KLLD), 671–743 (ALKE…EKKN), 774–811 (LTES…SECG), and 938–968 (IEEV…TLSS). A compositionally biased stretch (pro residues) spans 338–354 (IPPPPATLPPSPPPPSP). Positions 355-365 (SSFNSPKSPAP) are enriched in low complexity. The segment covering 375–384 (FTQNSGTKSP) has biased composition (polar residues). Over residues 492–504 (STSSSGKSSQGSS) the composition is skewed to low complexity. The span at 604 to 623 (SSNAFTNNDSSHQGDVSNAR) shows a compositional bias: polar residues. Positions 719-743 (KRQETESKHEPDSSKEEKRQGEKKN) are enriched in basic and acidic residues. The segment covering 941–952 (VDSRSGSDHHLE) has biased composition (basic and acidic residues). Residues 953–968 (TTSTISTVSSISTLSS) show a composition bias toward low complexity. An SH3-binding motif is present at residues 991 to 997 (PPVPPKP). The interval 1087 to 1115 (TKTGEGLDSPTGMKTASLSTRGTDALSTV) is disordered. Residues 1098–1115 (GMKTASLSTRGTDALSTV) are compositionally biased toward polar residues. One can recognise an SAM domain in the interval 1229–1292 (WTKQDVAEWL…ERALKQLLDR (64 aa)).

It belongs to the SHANK family.

It is found in the cytoplasm. It localises to the synapse. The protein resides in the postsynaptic density. Seems to be an adapter protein in the postsynaptic density (PSD) of excitatory synapses that interconnects receptors of the postsynaptic membrane including NMDA-type and metabotropic glutamate receptors, and the actin-based cytoskeleton. May play a role in the structural and functional organization of the dendritic spine and synaptic junction. The sequence is that of SH3 and multiple ankyrin repeat domains protein 2 (shank2) from Xenopus laevis (African clawed frog).